The chain runs to 64 residues: Large ribosomal subunit protein bL28 (64 aa).

This sequence belongs to the bacterial ribosomal protein bL28 family.

This chain is Large ribosomal subunit protein bL28 (rpmB), found in Mycobacterium leprae (strain TN).